The sequence spans 503 residues: Maturase K (503 aa).

Belongs to the intron maturase 2 family. MatK subfamily.

The protein resides in the plastid. It localises to the chloroplast. Functionally, usually encoded in the trnK tRNA gene intron. Probably assists in splicing its own and other chloroplast group II introns. The chain is Maturase K from Rosa foetida (Austrian briar).